The primary structure comprises 1097 residues: Protein toll (1097 aa).

An N-terminal signal peptide occupies residues 1–27 (MSRLKAASELALLVIILQLLQWPGSEA). Residues 28 to 807 (SFGRDACSEM…ICPAEKGVFI (780 aa)) are Extracellular-facing. 3 disulfide bridges follow: Cys-34-Cys-45, Cys-43-Cys-56, and Cys-79-Cys-107. 3 N-linked (GlcNAc...) asparagine glycosylation sites follow: Asn-80, Asn-140, and Asn-175. 15 LRR repeats span residues 175-195 (NLSH…LFDD), 198-219 (NLES…IFGK), 222-243 (KLKQ…DFEG), 246-267 (SVLG…VFAH), 270-291 (NVTD…LFDH), 294-314 (HLNE…PSRL), 320-340 (ELQI…LFEH), 343-364 (QITN…LLEH), 367-388 (NLLS…LFAH), 391-412 (NLTD…IFSN), 415-436 (NLVT…AFVS), 439-460 (GLRH…LDIM), 474-495 (GLLT…WKNT), 498-521 (QLRE…AFLS), and 523-544 (NRLH…EDVH). The N-linked (GlcNAc...) asparagine glycan is linked to Asn-235. 2 N-linked (GlcNAc...) asparagine glycosylation sites follow: Asn-270 and Asn-275. A glycan (N-linked (GlcNAc...) asparagine) is linked at Asn-346. A glycan (N-linked (GlcNAc...) asparagine) is linked at Asn-391. 3 N-linked (GlcNAc...) asparagine glycosylation sites follow: Asn-482, Asn-508, and Asn-528. The LRRCT 1 domain occupies 561-620 (NPLVCDCTILWFIQLVRGVHKPQYSRQFKLRTDRLVCSQPNVLEGTPVRQIEPQTLICPL). 4 cysteine pairs are disulfide-bonded: Cys-565-Cys-597, Cys-567-Cys-618, Cys-631-Cys-637, and Cys-635-Cys-650. The region spanning 622–663 (FSDDPRERKCPRGCNCHVRTYDKALVINCHSGNLTHVPRLPN) is the LRRNT domain. Asn-654, Asn-677, Asn-703, Asn-715, Asn-730, and Asn-738 each carry an N-linked (GlcNAc...) asparagine glycan. LRR repeat units lie at residues 669–690 (QLME…NTPG), 693–713 (SVTS…DQLP), and 715–738 (NLTH…GFLN). In terms of domain architecture, LRRCT 2 spans 751-801 (NPWMCDCTAKPLLLFTQDNFERIGDRNEMMCVNAEMPTRMVELSTNDICPA). Disulfide bonds link Cys-755–Cys-781 and Cys-757–Cys-799. A helical membrane pass occupies residues 808–828 (ALAVVIALTGLLAGFTAALYY). Residues 829 to 1097 (KFQTEIKIWL…INTNAKQSDV (269 aa)) lie on the Cytoplasmic side of the membrane. In terms of domain architecture, TIR spans 857–993 (KKFDAFISYS…WFWDKLRFAL (137 aa)).

This sequence belongs to the Toll-like receptor family. As to quaternary structure, in the absence of ligand, forms a low-affinity disulfide-linked homodimer. In the presence of ligand, crystal structures show one Tl molecule bound to a spaetzle C-106 homodimer. However, the active complex probably consists of two Tl molecules bound to a spaetzle C-106 homodimer. This is supported by in vitro experiments which also show binding of the spaetzle C-106 dimer to 2 Tl receptors. Ligand binding induces conformational changes in the extracellular domain of Tl. This may enable a secondary homodimerization interface at the C-terminus of the Tl extracellular domain. In early embryos, concentrated in the pseudocleavage furrows that form transiently between nuclei before cellularization and in the cleavage furrows during cellularization (at protein level). Later, found on cells in the mesectoderm, stomodeum, proctodeum, anterior and posterior midguts, splanchnopleura, salivary gland placode and adjacent to the segmentally repeated tracheal placodes (at protein level). During and after germ band shortening, localized in a number of cell types, including the salivary gland, foregut, hindgut, Malpighian tubules and epidermis (at protein level). In embryos, high expression in M13 with comparatively low expression in M12.

The protein resides in the cell membrane. The protein localises to the cytoplasm. Its function is as follows. Receptor for the cleaved activated form of spz, spaetzle C-106. Binding to spaetzle C-106 activates the Toll signaling pathway and induces expression of the antifungal peptide drosomycin. Component of the extracellular signaling pathway that establishes dorsal-ventral polarity in the embryo. Promotes heterophilic cellular adhesion. Involved in synaptic targeting of motoneurons RP5 and V to muscle 12 (M12); functions as a repulsive cue inhibiting motoneuron synapse formation on muscle 13 (M13) to guide RP5 and V to the neighboring M12, where its expression is repressed by tey. May also function in embryonic neuronal survival and the synaptic targeting of SNa motoneurons. In Drosophila melanogaster (Fruit fly), this protein is Protein toll.